Reading from the N-terminus, the 180-residue chain is GTP cyclohydrolase 1 (180 aa).

Positions 71, 74, and 142 each coordinate Zn(2+).

It belongs to the GTP cyclohydrolase I family. In terms of assembly, homomer.

The catalysed reaction is GTP + H2O = 7,8-dihydroneopterin 3'-triphosphate + formate + H(+). It functions in the pathway cofactor biosynthesis; 7,8-dihydroneopterin triphosphate biosynthesis; 7,8-dihydroneopterin triphosphate from GTP: step 1/1. The chain is GTP cyclohydrolase 1 from Helicobacter pylori (strain P12).